The following is a 195-amino-acid chain: FMN-dependent NADH:quinone oxidoreductase (195 aa).

FMN contacts are provided by residues Ser9, 15 to 17 (SVS), 85 to 88 (MYNF), and 129 to 132 (SRGG).

It belongs to the azoreductase type 1 family. As to quaternary structure, homodimer. Requires FMN as cofactor.

The catalysed reaction is 2 a quinone + NADH + H(+) = 2 a 1,4-benzosemiquinone + NAD(+). The enzyme catalyses N,N-dimethyl-1,4-phenylenediamine + anthranilate + 2 NAD(+) = 2-(4-dimethylaminophenyl)diazenylbenzoate + 2 NADH + 2 H(+). Functionally, quinone reductase that provides resistance to thiol-specific stress caused by electrophilic quinones. In terms of biological role, also exhibits azoreductase activity. Catalyzes the reductive cleavage of the azo bond in aromatic azo compounds to the corresponding amines. The chain is FMN-dependent NADH:quinone oxidoreductase from Stenotrophomonas maltophilia (strain K279a).